We begin with the raw amino-acid sequence, 455 residues long: Chromosomal replication initiator protein DnaA (455 aa).

A domain I, interacts with DnaA modulators region spans residues 1–75 (MLERNDLWNL…AMQATNEQIR (75 aa)). Residues 75 to 117 (RPVMITEEERQQLTRDKDSQVTTGNVAGQQPTTATTPTFMRET) are domain II. The segment covering 84–93 (RQQLTRDKDS) has biased composition (basic and acidic residues). Residues 84–107 (RQQLTRDKDSQVTTGNVAGQQPTT) are disordered. Positions 118–334 (KLNPKYTFDT…GALARVQAYS (217 aa)) are domain III, AAA+ region. ATP-binding residues include G162, G164, K165, and T166. Positions 335-455 (RLNNSPITTS…VGDLTGQLKS (121 aa)) are domain IV, binds dsDNA.

This sequence belongs to the DnaA family. As to quaternary structure, oligomerizes as a right-handed, spiral filament on DNA at oriC.

The protein resides in the cytoplasm. Plays an essential role in the initiation and regulation of chromosomal replication. ATP-DnaA binds to the origin of replication (oriC) to initiate formation of the DNA replication initiation complex once per cell cycle. Binds the DnaA box (a 9 base pair repeat at the origin) and separates the double-stranded (ds)DNA. Forms a right-handed helical filament on oriC DNA; dsDNA binds to the exterior of the filament while single-stranded (ss)DNA is stabiized in the filament's interior. The ATP-DnaA-oriC complex binds and stabilizes one strand of the AT-rich DNA unwinding element (DUE), permitting loading of DNA polymerase. After initiation quickly degrades to an ADP-DnaA complex that is not apt for DNA replication. Binds acidic phospholipids. This chain is Chromosomal replication initiator protein DnaA, found in Lactiplantibacillus plantarum (strain ATCC BAA-793 / NCIMB 8826 / WCFS1) (Lactobacillus plantarum).